The sequence spans 317 residues: Transcriptional activator protein med (317 aa).

The N-terminal stretch at 1–17 is a signal peptide; it reads MITRLVMIFSVLLLLSG. Cys-18 carries the N-palmitoyl cysteine lipid modification. Residue Cys-18 is the site of S-diacylglycerol cysteine attachment.

It belongs to the BMP lipoprotein family.

It is found in the cell membrane. Functionally, positive activator of the comK gene. In Bacillus subtilis (strain 168), this protein is Transcriptional activator protein med (med).